We begin with the raw amino-acid sequence, 719 residues long: DNA ligase (719 aa).

Residues 42 to 46 (DAEYD), 91 to 92 (SL), and E125 each bind NAD(+). The N6-AMP-lysine intermediate role is filled by K127. 4 residues coordinate NAD(+): R148, E184, K300, and K324. C429, C432, C447, and C453 together coordinate Zn(2+). One can recognise a BRCT domain in the interval 638 to 719 (TASSPIAEKI…WMRLIKGHNI (82 aa)).

Belongs to the NAD-dependent DNA ligase family. LigA subfamily. It depends on Mg(2+) as a cofactor. The cofactor is Mn(2+).

The catalysed reaction is NAD(+) + (deoxyribonucleotide)n-3'-hydroxyl + 5'-phospho-(deoxyribonucleotide)m = (deoxyribonucleotide)n+m + AMP + beta-nicotinamide D-nucleotide.. In terms of biological role, DNA ligase that catalyzes the formation of phosphodiester linkages between 5'-phosphoryl and 3'-hydroxyl groups in double-stranded DNA using NAD as a coenzyme and as the energy source for the reaction. It is essential for DNA replication and repair of damaged DNA. The chain is DNA ligase from Bartonella tribocorum (strain CIP 105476 / IBS 506).